Reading from the N-terminus, the 87-residue chain is MGGISIWQLLIIALIIVLLFGTKKLRSLGGDLGSAVKGFKKAIGDEELTVKKDNTEADADFEQKTLSKEEQQSEDPVQKSQKDKEQV.

Residues methionine 1–glycine 21 form a helical membrane-spanning segment. Residues asparagine 54 to valine 87 form a disordered region.

The protein belongs to the TatA/E family. In terms of assembly, the Tat system comprises two distinct complexes: a TatABC complex, containing multiple copies of TatA, TatB and TatC subunits, and a separate TatA complex, containing only TatA subunits. Substrates initially bind to the TatABC complex, which probably triggers association of the separate TatA complex to form the active translocon.

The protein localises to the cell inner membrane. Its function is as follows. Part of the twin-arginine translocation (Tat) system that transports large folded proteins containing a characteristic twin-arginine motif in their signal peptide across membranes. TatA could form the protein-conducting channel of the Tat system. This is Sec-independent protein translocase protein TatA from Photobacterium profundum (strain SS9).